The following is a 173-amino-acid chain: RNA polymerase sigma factor TcsR (173 aa).

Positions 122–169 (IKDLTQNEKNIIRKIYLDRLRESEISRELNISRQAVNKTHLRALEKLK) are sigma-70 factor domain-4. Positions 143–162 (ESEISRELNISRQAVNKTHL) form a DNA-binding region, H-T-H motif.

It belongs to the sigma-70 factor family.

Its function is as follows. Sigma factors are initiation factors that promote the attachment of RNA polymerase to specific initiation sites and are then released. Transcriptional regulator specifically required to activate expression of the toxin gene locus, composed of tcsL, tcsH and tcdE/utxA. The polypeptide is RNA polymerase sigma factor TcsR (Paraclostridium sordellii (Clostridium sordellii)).